The sequence spans 799 residues: Cadherin-8 (799 aa).

Positions 1-29 are cleaved as a signal peptide; that stretch reads MPERLAETLMDLWTPLIILWITLPSCVYT. Residues 30–61 constitute a propeptide that is removed on maturation; it reads APMNQAHVLTTGSPLELSRQSEDMRILSRSKR. 5 Cadherin domains span residues 62 to 167, 168 to 276, 277 to 391, 392 to 494, and 495 to 616; these read GWVW…APEF, LNGP…PPKF, AQSL…PPVF, SSPT…DNAP, and EFAS…YVLP. Over 62 to 621 the chain is Extracellular; the sequence is GWVWNQMFVL…AYVLPIGLSM (560 aa). The N-linked (GlcNAc...) asparagine glycan is linked to N188. N463, N473, and N544 each carry an N-linked (GlcNAc...) asparagine glycan. The chain crosses the membrane as a helical span at residues 622–642; sequence GALIAILACIILLLVIVVLFV. At 643–799 the chain is on the cytoplasmic side; that stretch reads TLRRHKNEPL…YSVGESDKET (157 aa). S795 carries the post-translational modification Phosphoserine.

The protein localises to the cell membrane. In terms of biological role, cadherins are calcium-dependent cell adhesion proteins. They preferentially interact with themselves in a homophilic manner in connecting cells; cadherins may thus contribute to the sorting of heterogeneous cell types. The chain is Cadherin-8 (Cdh8) from Mus musculus (Mouse).